Reading from the N-terminus, the 364-residue chain is MARTMRSRVVAGAVACAMSIAPFAGTTAVMTLATTHAAMAATAPAAGYAATRYPIILVHGLSGTDKYAGVLEYWYGIQEDLQQNGATVYVANLSGFQSDDGPNGRGEQLLAYVKTVLAATGATKVNLVGHSQGGLSSRYVAAVAPDLVASVTTIGTPHRGSEFADFVQDVLAYDPTGLSSSVIAAFVNVFGILTSSSHNTNQDALAALQTLTTARAATYNQNYPSAGLGAPGSCQTGAPTETVGGNTHLLYSWAGTAIQPTLSVFGVTGATDTSTLPLVDPANVLDLSTLALFGTGTVMINRGSGQNDGLVSKCSALYGKVLSTSYKWNHLDEINQLLGVRGAYAEDPVAVIRTHANRLKLAGV.

Residues 1 to 44 (MARTMRSRVVAGAVACAMSIAPFAGTTAVMTLATTHAAMAATAP) form the signal peptide. Positions 54–266 (PIILVHGLSG…AIQPTLSVFG (213 aa)) constitute an AB hydrolase-1 domain. Leucine 61 provides a ligand contact to substrate. The Nucleophile role is filled by serine 131. Glutamine 132 contributes to the substrate binding site. Cysteine 234 and cysteine 314 are oxidised to a cystine. Aspartate 286 contacts Ca(2+). Catalysis depends on charge relay system residues aspartate 308 and histidine 330. 3 residues coordinate Ca(2+): aspartate 332, glutamine 336, and valine 340.

Belongs to the AB hydrolase superfamily. Pseudomonas lipase family. As to quaternary structure, monomer. It depends on Ca(2+) as a cofactor.

It localises to the secreted. The enzyme catalyses a triacylglycerol + H2O = a diacylglycerol + a fatty acid + H(+). With respect to regulation, inhibited by RC-(Rp,Sp)- and SC-(Rp,Sp)-1,2-dioctylcarbamoylglycero-3-O-p-nitrophenyl octylphosphonate. Also inhibited by diethyl-p-nitrophenylphosphate (E600). Catalyzes the hydrolysis of triacylglycerol. It shows a preference for triacylglycerols with a chain length between 6 and 12 carbons. This Burkholderia cepacia (Pseudomonas cepacia) protein is Triacylglycerol lipase.